The primary structure comprises 436 residues: ATP-dependent protease ATPase subunit HslU (436 aa).

ATP contacts are provided by residues Ile19, 61–65 (GVGKT), Asp249, Glu314, and Arg386.

It belongs to the ClpX chaperone family. HslU subfamily. In terms of assembly, a double ring-shaped homohexamer of HslV is capped on each side by a ring-shaped HslU homohexamer. The assembly of the HslU/HslV complex is dependent on binding of ATP.

The protein resides in the cytoplasm. Its function is as follows. ATPase subunit of a proteasome-like degradation complex; this subunit has chaperone activity. The binding of ATP and its subsequent hydrolysis by HslU are essential for unfolding of protein substrates subsequently hydrolyzed by HslV. HslU recognizes the N-terminal part of its protein substrates and unfolds these before they are guided to HslV for hydrolysis. This Bartonella tribocorum (strain CIP 105476 / IBS 506) protein is ATP-dependent protease ATPase subunit HslU.